Reading from the N-terminus, the 103-residue chain is Protamine-3 (103 aa).

The tract at residues 1–103 is disordered; the sequence is MGSRCAKLNT…QSPEPKRTPS (103 aa). A compositionally biased stretch (low complexity) spans 10 to 21; sequence TGQSPGHSPGHS. A compositionally biased stretch (acidic residues) spans 50–66; the sequence is GEEEEEEEEEGEEEEKE. Basic and acidic residues predominate over residues 78-90; it reads EPERQEEGHKDNA. Serine 95 carries the phosphoserine modification.

This sequence belongs to the protamine P3 family.

It is found in the nucleus. The protein localises to the chromosome. Its function is as follows. Protamines substitute for histones in the chromatin of sperm during the haploid phase of spermatogenesis. They compact sperm DNA into a highly condensed, stable and inactive complex. This chain is Protamine-3 (PRM3), found in Homo sapiens (Human).